The primary structure comprises 423 residues: Glycine amidinotransferase, mitochondrial (423 aa).

A mitochondrion-targeting transit peptide spans 1-43; it reads MLRVRCLRGGSRGAEALHYIGSRLGRTVTGWVQRTFQSTQAAT. A phosphoserine mark is found at Ser-46 and Ser-49. Asp-170 contributes to the arginine binding site. Active-site residues include Asp-254 and His-303. 4 residues coordinate arginine: Asp-305, Arg-322, Ser-354, and Ser-355. N6-acetyllysine is present on Lys-385. The Amidino-cysteine intermediate role is filled by Cys-407.

It belongs to the amidinotransferase family. As to quaternary structure, homodimer. In terms of tissue distribution, kidney. Expressed biallelically in placenta.

It localises to the mitochondrion inner membrane. The catalysed reaction is L-arginine + glycine = guanidinoacetate + L-ornithine. It catalyses the reaction 4-aminobutanoate + L-arginine = 4-guanidinobutanoate + L-ornithine. It carries out the reaction beta-alanine + L-arginine = 3-guanidinopropanoate + L-ornithine. The enzyme catalyses taurine + L-arginine = taurocyamine + L-ornithine. The protein operates within amine and polyamine biosynthesis; creatine biosynthesis; creatine from L-arginine and glycine: step 1/2. Its function is as follows. Transamidinase that catalyzes the transfer of the amidino group of L-arginine onto the amino moiety of acceptor metabolites such as glycine, beta-alanine, gamma-aminobutyric acid (GABA) and taurine yielding the corresponding guanidine derivatives. Catalyzes the rate-limiting step of creatine biosynthesis, namely the transfer of the amidino group from L-arginine to glycine to generate guanidinoacetate, which is then methylated by GAMT to form creatine. Provides creatine as a source for ATP generation in tissues with high energy demands, in particular skeletal muscle, heart and brain. The sequence is that of Glycine amidinotransferase, mitochondrial (GATM) from Sus scrofa (Pig).